The following is a 488-amino-acid chain: Ribulose bisphosphate carboxylase large chain (488 aa).

Residues asparagine 127 and threonine 177 each contribute to the substrate site. The active-site Proton acceptor is the lysine 179. Residue lysine 181 participates in substrate binding. 3 residues coordinate Mg(2+): lysine 205, aspartate 207, and glutamate 208. At lysine 205 the chain carries N6-carboxylysine. Histidine 297 acts as the Proton acceptor in catalysis. Arginine 298, histidine 330, and serine 382 together coordinate substrate.

The protein belongs to the RuBisCO large chain family. Type I subfamily. As to quaternary structure, heterohexadecamer of 8 large chains and 8 small chains. The cofactor is Mg(2+).

Its subcellular location is the plastid. It localises to the chloroplast. The catalysed reaction is 2 (2R)-3-phosphoglycerate + 2 H(+) = D-ribulose 1,5-bisphosphate + CO2 + H2O. The enzyme catalyses D-ribulose 1,5-bisphosphate + O2 = 2-phosphoglycolate + (2R)-3-phosphoglycerate + 2 H(+). Functionally, ruBisCO catalyzes two reactions: the carboxylation of D-ribulose 1,5-bisphosphate, the primary event in carbon dioxide fixation, as well as the oxidative fragmentation of the pentose substrate in the photorespiration process. Both reactions occur simultaneously and in competition at the same active site. This is Ribulose bisphosphate carboxylase large chain from Chrysotila carterae (Marine alga).